Here is a 2144-residue protein sequence, read N- to C-terminus: Insulin-like receptor (2144 aa).

The N-terminal stretch at 1–43 (MFNMPRGVTKSKSKRGKIKMENDMAAAATTTACTLGHICVLCR) is a signal peptide. N74 is a glycosylation site (N-linked (GlcNAc...) asparagine). Positions 174 to 199 (RRQHQQQHHHHYQHHHQQHHQQHHQR) are enriched in basic residues. The disordered stretch occupies residues 174 to 200 (RRQHQQQHHHHYQHHHQQHHQQHHQRQ). N-linked (GlcNAc...) asparagine glycosylation occurs at N203. Residues 229–256 (NYKQQQQLQHNQQLPRATPQQKQQEKDR) are disordered. Residues 232–242 (QQQQLQHNQQL) show a composition bias toward low complexity. 6 N-linked (GlcNAc...) asparagine glycosylation sites follow: N265, N356, N376, N406, N468, and N509. Disulfide bonds link C531–C539, C535–C545, C546–C554, C550–C564, C567–C576, C580–C591, C597–C618, and C635–C638. An FU repeat occupies 542-586 (EHTCCSQDCLGGCVIDKNGNESCISCRNVSFNNICMDSCPKGYYQ). N-linked (GlcNAc...) asparagine glycosylation is found at N561 and N569. N-linked (GlcNAc...) asparagine glycans are attached at residues N751, N810, N824, N839, N864, N898, N946, N1053, N1147, N1218, and N1265. 2 consecutive Fibronectin type-III domains span residues 825 to 927 (VTTK…TNPG) and 928 to 1026 (RPSK…EYDD). The tract at residues 1053-1084 (NGSSDKSDGAEGAALDSNAIPNGGATNPSRRR) is disordered. Residues 1210 to 1305 (LKVDLEHANN…EVEHIKVEPP (96 aa)) form the Fibronectin type-III 3 domain. A helical membrane pass occupies residues 1311-1331 (VFFWLLGIGLAFLIVSLFGYV). Residues 1332 to 2144 (CYLHKRKVPS…PPNGFIGREA (813 aa)) are Cytoplasmic-facing. The interval 1351–1354 (NPFY) is chico-binding. At Y1354 the chain carries Phosphotyrosine; by autocatalysis. One can recognise a Protein kinase domain in the interval 1371-1659 (IIQLAPLGQG…LEPQCPNSQF (289 aa)). ATP-binding positions include 1377 to 1385 (LGQGSFGMV) and K1405. D1519 (proton acceptor) is an active-site residue. Residues Y1545, Y1549, and Y1550 each carry the phosphotyrosine; by autocatalysis modification. Disordered stretches follow at residues 1690–1724 (VPLD…DQPP), 1788–1871 (RGYE…KKTV), 1886–1962 (LFNH…ISDN), and 2020–2144 (ISHN…GREA). S1816 carries the post-translational modification Phosphoserine. Composition is skewed to low complexity over residues 1849–1860 (STASAGSSNASS) and 1894–1916 (SNAS…NLTS). A compositionally biased stretch (acidic residues) spans 2042 to 2062 (SDEDNEQEEDDEDEDDDVDDE). Positions 2063 to 2073 (HVEHIKMERMP) are enriched in basic and acidic residues. Residues 2084–2120 (SKTQPPRSRSVSQTRKSPTNPNSGIGATGAGNRSNLL) are compositionally biased toward polar residues.

It belongs to the protein kinase superfamily. Tyr protein kinase family. Insulin receptor subfamily. Tetramer of 2 alpha and 2 beta chains linked by disulfide bonds. The alpha chains contribute to the formation of the ligand-binding domain, while the beta chains carry the kinase domain. Interacts (via C-terminal cytoplasmic region) with dock/dreadlocks (via SH2 and SH3 domains); when autophosphorylated. May interact (via beta subunit) with chico/IRS-1; this interaction may lead to tyrosine phosphorylation of the insulin receptor substrate chico. Interacts with Elp6; the interaction may stabilize Elp6. It depends on Mn(2+) as a cofactor. The 280 kDa proreceptor is proteolytically processed to form a 120 kDa alpha subunit and a 170 kDa beta subunit. The beta subunit undergoes cell-specific cleavage to generate a 90 kDa beta subunit and a free 60 kDa C-terminal subunit. Both the 90 kDa and the 170 kDa beta subunits can assemble with the alpha subunits to form mature receptors. Post-translationally, autophosphorylated on tyrosine residues, including Tyr-1549 and Tyr-1550, in response to exogenous insulin. Tyr-1549 and Tyr-1550 are dephosphorylated by Ptp61F recruited by the dock/dreadlocks adapter protein. In terms of processing, phosphorylation of Tyr-1354 is required for Chico-binding.

The protein resides in the membrane. It is found in the cell projection. The protein localises to the axon. Its subcellular location is the growth cone membrane. The enzyme catalyses L-tyrosyl-[protein] + ATP = O-phospho-L-tyrosyl-[protein] + ADP + H(+). Activated in response to insulin. Autophosphorylation activates the kinase activity. Has a ligand-stimulated tyrosine-protein kinase activity. Binds 3 insulin-like peptide ligands. Regulates cell number and cell size during development by regulating cell growth and survival, affecting body size and organ size, including ovaries and imaginal disks. Plays a role in life-span determination. May be involved in regulation of other neuroendocrine signaling pathways. Involved in the development of the embryonic nervous system. Functions upstream of dock/dreadlocks for photoreceptor (R cell) axon guidance and targeting in the visual system. Involved in the acs mediated recovery of gut enterocytes following the cytoplasmic purge response to intestinal bacterial infection. The polypeptide is Insulin-like receptor (Drosophila melanogaster (Fruit fly)).